A 349-amino-acid polypeptide reads, in one-letter code: Protein-glutamate methylesterase/protein-glutamine glutaminase (349 aa).

The Response regulatory domain maps to 5–122 (RVLSVDDSAL…REGMLAYSEM (118 aa)). D56 is modified (4-aspartylphosphate). The region spanning 152–344 (LLSSEKLIAI…QQMLATISAG (193 aa)) is the CheB-type methylesterase domain. Active-site residues include S164, H190, and D286.

Belongs to the CheB family. Post-translationally, phosphorylated by CheA. Phosphorylation of the N-terminal regulatory domain activates the methylesterase activity.

It localises to the cytoplasm. The enzyme catalyses [protein]-L-glutamate 5-O-methyl ester + H2O = L-glutamyl-[protein] + methanol + H(+). The catalysed reaction is L-glutaminyl-[protein] + H2O = L-glutamyl-[protein] + NH4(+). Functionally, involved in chemotaxis. Part of a chemotaxis signal transduction system that modulates chemotaxis in response to various stimuli. Catalyzes the demethylation of specific methylglutamate residues introduced into the chemoreceptors (methyl-accepting chemotaxis proteins or MCP) by CheR. Also mediates the irreversible deamidation of specific glutamine residues to glutamic acid. In Shigella flexneri, this protein is Protein-glutamate methylesterase/protein-glutamine glutaminase.